Reading from the N-terminus, the 363-residue chain is 3-dehydroquinate synthase (363 aa).

NAD(+) is bound by residues 71 to 76, 105 to 109, 129 to 130, Lys-142, Lys-151, and 169 to 172; these read DGEQYK, GVIGD, TT, and CLKT. Zn(2+)-binding residues include Glu-184, His-247, and His-264.

Belongs to the sugar phosphate cyclases superfamily. Dehydroquinate synthase family. Requires NAD(+) as cofactor. It depends on Co(2+) as a cofactor. Zn(2+) serves as cofactor.

The protein resides in the cytoplasm. It carries out the reaction 7-phospho-2-dehydro-3-deoxy-D-arabino-heptonate = 3-dehydroquinate + phosphate. The protein operates within metabolic intermediate biosynthesis; chorismate biosynthesis; chorismate from D-erythrose 4-phosphate and phosphoenolpyruvate: step 2/7. Its function is as follows. Catalyzes the conversion of 3-deoxy-D-arabino-heptulosonate 7-phosphate (DAHP) to dehydroquinate (DHQ). The polypeptide is 3-dehydroquinate synthase (Vibrio vulnificus (strain CMCP6)).